Reading from the N-terminus, the 366-residue chain is Aminomethyltransferase (366 aa).

This sequence belongs to the GcvT family. As to quaternary structure, the glycine cleavage system is composed of four proteins: P, T, L and H.

It catalyses the reaction N(6)-[(R)-S(8)-aminomethyldihydrolipoyl]-L-lysyl-[protein] + (6S)-5,6,7,8-tetrahydrofolate = N(6)-[(R)-dihydrolipoyl]-L-lysyl-[protein] + (6R)-5,10-methylene-5,6,7,8-tetrahydrofolate + NH4(+). The glycine cleavage system catalyzes the degradation of glycine. In Bordetella avium (strain 197N), this protein is Aminomethyltransferase.